We begin with the raw amino-acid sequence, 306 residues long: Glutathione transport system permease protein GsiC (306 aa).

Topologically, residues 1–8 are cytoplasmic; the sequence is MLNYFIKR. The chain crosses the membrane as a helical span at residues 9–29; it reads LLGLIPTLLIVMVLVFLFVHL. The Periplasmic portion of the chain corresponds to 30-98; it reads LPGDPARLAA…QEIALRFMPT (69 aa). The ABC transmembrane type-1 domain occupies 95–292; the sequence is FMPTFWLTVC…LEFILINLLV (198 aa). Residues 99 to 119 form a helical membrane-spanning segment; that stretch reads FWLTVCSMAWAVIFGMAIGIV. The Cytoplasmic portion of the chain corresponds to 120-130; the sequence is SAVWRNGWPDR. The chain crosses the membrane as a helical span at residues 131-151; it reads IGMTLAVSGLSFPAFALGMLL. Residues 152–168 are Periplasmic-facing; the sequence is MQIFSVELGWLPTVGAD. Residues 169–189 traverse the membrane as a helical segment; that stretch reads TWLHYILPSLTLGAAVAAVMA. Over 190–228 the chain is Cytoplasmic; sequence RFTRASFVDVLQEDYMRTARAKGVRESLVVLKHGLRNAL. A helical transmembrane segment spans residues 229 to 249; the sequence is IPVVTMMGLQFGFLLGGSIVV. Topologically, residues 250–278 are periplasmic; it reads EKVFNWPGLGRLLVDSVEMRDYPVIQAEV. The helical transmembrane segment at 279 to 299 threads the bilayer; it reads LLFSLEFILINLLVDMLYAAI. Residues 300–306 are Cytoplasmic-facing; sequence NPAIRYK.

Belongs to the binding-protein-dependent transport system permease family. As to quaternary structure, the complex is composed of two ATP-binding proteins (GsiA), two transmembrane proteins (GsiC and GsiD) and a solute-binding protein (GsiB).

It is found in the cell inner membrane. Its function is as follows. Part of the ABC transporter complex GsiABCD involved in glutathione import. Probably responsible for the translocation of the substrate across the membrane. The sequence is that of Glutathione transport system permease protein GsiC from Pectobacterium atrosepticum (strain SCRI 1043 / ATCC BAA-672) (Erwinia carotovora subsp. atroseptica).